Consider the following 230-residue polypeptide: Probable methylthioribulose-1-phosphate dehydratase (230 aa).

A substrate-binding site is contributed by cysteine 87. Zn(2+)-binding residues include histidine 105 and histidine 107. Glutamate 129 functions as the Proton donor/acceptor in the catalytic mechanism. Histidine 185 is a Zn(2+) binding site.

The protein belongs to the aldolase class II family. MtnB subfamily. Requires Zn(2+) as cofactor.

It is found in the cytoplasm. It catalyses the reaction 5-(methylsulfanyl)-D-ribulose 1-phosphate = 5-methylsulfanyl-2,3-dioxopentyl phosphate + H2O. It participates in amino-acid biosynthesis; L-methionine biosynthesis via salvage pathway; L-methionine from S-methyl-5-thio-alpha-D-ribose 1-phosphate: step 2/6. Catalyzes the dehydration of methylthioribulose-1-phosphate (MTRu-1-P) into 2,3-diketo-5-methylthiopentyl-1-phosphate (DK-MTP-1-P). The chain is Probable methylthioribulose-1-phosphate dehydratase from Drosophila pseudoobscura pseudoobscura (Fruit fly).